We begin with the raw amino-acid sequence, 109 residues long: Spermidine export protein MdtI (109 aa).

Transmembrane regions (helical) follow at residues 6-26 (WIHG…NVLL), 36-56 (CYGI…SQAV), 64-84 (AYAL…WVLF), and 88-108 (LNPK…MIKF).

The protein belongs to the drug/metabolite transporter (DMT) superfamily. Small multidrug resistance (SMR) (TC 2.A.7.1) family. MdtI subfamily. In terms of assembly, forms a complex with MdtJ.

It localises to the cell inner membrane. In terms of biological role, catalyzes the excretion of spermidine. This Salmonella choleraesuis (strain SC-B67) protein is Spermidine export protein MdtI.